Reading from the N-terminus, the 128-residue chain is Histone H2A type 1-H (128 aa).

Positions 1-22 are disordered; sequence MSGRGKQGGKARAKAKTRSSRA. N-acetylserine is present on Ser-2. Ser-2 carries the post-translational modification Phosphoserine; by RPS6KA5. Citrulline; alternate is present on Arg-4. Arg-4 is modified (symmetric dimethylarginine; by PRMT5; alternate). N6-(2-hydroxyisobutyryl)lysine; alternate occurs at positions 6 and 10. N6-(beta-hydroxybutyryl)lysine; alternate is present on Lys-6. Over residues 7 to 19 the composition is skewed to basic residues; the sequence is QGGKARAKAKTRS. Lys-10 is modified (N6-lactoyllysine; alternate). The residue at position 10 (Lys-10) is an N6-succinyllysine; alternate. Residues Lys-14 and Lys-16 each participate in a glycyl lysine isopeptide (Lys-Gly) (interchain with G-Cter in ubiquitin) cross-link. Lys-37 is modified (N6-(2-hydroxyisobutyryl)lysine; alternate). An N6-(beta-hydroxybutyryl)lysine; alternate modification is found at Lys-37. An N6-crotonyllysine; alternate modification is found at Lys-37. N6-(2-hydroxyisobutyryl)lysine occurs at positions 75 and 76. N6-(2-hydroxyisobutyryl)lysine; alternate is present on Lys-96. An N6-succinyllysine; alternate modification is found at Lys-96. Lys-96 carries the N6-glutaryllysine; alternate modification. Position 105 is an N5-methylglutamine (Gln-105). Lys-119 bears the N6-(2-hydroxyisobutyryl)lysine; alternate mark. 2 positions are modified to N6-crotonyllysine; alternate: Lys-119 and Lys-120. 2 positions are modified to N6-glutaryllysine; alternate: Lys-119 and Lys-120. Lys-120 is modified (N6-(beta-hydroxybutyryl)lysine; alternate). Lys-120 participates in a covalent cross-link: Glycyl lysine isopeptide (Lys-Gly) (interchain with G-Cter in ubiquitin); alternate. Thr-121 carries the phosphothreonine; by DCAF1 modification. Lys-126 bears the N6-(beta-hydroxybutyryl)lysine; alternate mark. Lys-126 is subject to N6-crotonyllysine; alternate. The residue at position 126 (Lys-126) is an N6-glutaryllysine; alternate.

Belongs to the histone H2A family. As to quaternary structure, the nucleosome is a histone octamer containing two molecules each of H2A, H2B, H3 and H4 assembled in one H3-H4 heterotetramer and two H2A-H2B heterodimers. The octamer wraps approximately 147 bp of DNA. Deiminated on Arg-4 in granulocytes upon calcium entry. In terms of processing, monoubiquitination of Lys-120 (H2AK119Ub) by RING1, TRIM37 and RNF2/RING2 complex gives a specific tag for epigenetic transcriptional repression and participates in X chromosome inactivation of female mammals. It is involved in the initiation of both imprinted and random X inactivation. Ubiquitinated H2A is enriched in inactive X chromosome chromatin. Ubiquitination of H2A functions downstream of methylation of 'Lys-27' of histone H3 (H3K27me). H2AK119Ub by RNF2/RING2 can also be induced by ultraviolet and may be involved in DNA repair. Following DNA double-strand breaks (DSBs), it is ubiquitinated through 'Lys-63' linkage of ubiquitin moieties by the E2 ligase UBE2N and the E3 ligases RNF8 and RNF168, leading to the recruitment of repair proteins to sites of DNA damage. Ubiquitination at Lys-14 and Lys-16 (H2AK13Ub and H2AK15Ub, respectively) in response to DNA damage is initiated by RNF168 that mediates monoubiquitination at these 2 sites, and 'Lys-63'-linked ubiquitin are then conjugated to monoubiquitin; RNF8 is able to extend 'Lys-63'-linked ubiquitin chains in vitro. H2AK119Ub and ionizing radiation-induced 'Lys-63'-linked ubiquitination (H2AK13Ub and H2AK15Ub) are distinct events. Post-translationally, phosphorylation on Ser-2 (H2AS1ph) is enhanced during mitosis. Phosphorylation on Ser-2 by RPS6KA5/MSK1 directly represses transcription. Acetylation of H3 inhibits Ser-2 phosphorylation by RPS6KA5/MSK1. Phosphorylation at Thr-121 (H2AT120ph) by DCAF1 is present in the regulatory region of many tumor suppresor genes and down-regulates their transcription. Symmetric dimethylation on Arg-4 by the PRDM1/PRMT5 complex may play a crucial role in the germ-cell lineage. In terms of processing, glutamine methylation at Gln-105 (H2AQ104me) by FBL is specifically dedicated to polymerase I. It is present at 35S ribosomal DNA locus and impairs binding of the FACT complex. Post-translationally, crotonylation (Kcr) is specifically present in male germ cells and marks testis-specific genes in post-meiotic cells, including X-linked genes that escape sex chromosome inactivation in haploid cells. Crotonylation marks active promoters and enhancers and confers resistance to transcriptional repressors. It is also associated with post-meiotically activated genes on autosomes. Hydroxybutyrylation of histones is induced by starvation. In terms of processing, lactylated in macrophages by EP300/P300 by using lactoyl-CoA directly derived from endogenous or exogenous lactate, leading to stimulates gene transcription.

The protein localises to the nucleus. Its subcellular location is the chromosome. In terms of biological role, core component of nucleosome. Nucleosomes wrap and compact DNA into chromatin, limiting DNA accessibility to the cellular machineries which require DNA as a template. Histones thereby play a central role in transcription regulation, DNA repair, DNA replication and chromosomal stability. DNA accessibility is regulated via a complex set of post-translational modifications of histones, also called histone code, and nucleosome remodeling. The sequence is that of Histone H2A type 1-H from Mus musculus (Mouse).